Consider the following 208-residue polypeptide: Small ribosomal subunit protein uS4 (208 aa).

Residues 98-178 (SRLDNVVYRM…RPKWLEYDAE (81 aa)) enclose the S4 RNA-binding domain.

The protein belongs to the universal ribosomal protein uS4 family. In terms of assembly, part of the 30S ribosomal subunit. Contacts protein S5. The interaction surface between S4 and S5 is involved in control of translational fidelity.

Functionally, one of the primary rRNA binding proteins, it binds directly to 16S rRNA where it nucleates assembly of the body of the 30S subunit. With S5 and S12 plays an important role in translational accuracy. This chain is Small ribosomal subunit protein uS4, found in Acetivibrio thermocellus (strain ATCC 27405 / DSM 1237 / JCM 9322 / NBRC 103400 / NCIMB 10682 / NRRL B-4536 / VPI 7372) (Clostridium thermocellum).